Here is a 649-residue protein sequence, read N- to C-terminus: FAS-associated factor 1 (649 aa).

The 57-residue stretch at 1–57 folds into the UBA domain; it reads MASNMDREMILADFQACTGIENIDEAITLLEQNNWDLVAAINGVIPQENGILQSDFG. Positions 55–84 are disordered; the sequence is DFGGETMPGPTFDPASPPAPAPAPSSSAFR. Residue S319 is modified to Phosphoserine. Residues 568–645 enclose the UBX domain; sequence NAEPVSKLRI…NLFPQETLFL (78 aa). Position 579 is a phosphothreonine (T579). S581 carries the phosphoserine modification.

Interacts with CDT1 and ATPase VCP/p97. Interacts (via UBA domain) with FAS (via death domain). Interacts (via UBA domain) with NLRP12 (via DAPIN/PYRIN domain). In terms of tissue distribution, central nervous system.

It is found in the nucleus. Ubiquitin-binding protein. Required for the progression of DNA replication forks by targeting DNA replication licensing factor CDT1 for degradation. Potentiates but cannot initiate FAS-induced apoptosis. This Rattus norvegicus (Rat) protein is FAS-associated factor 1 (Faf1).